The primary structure comprises 381 residues: Ceramide-binding protein svf-1 (381 aa).

A peripherally associates with membranes region spans residues 1-18 (MFKWAQAALANVAGTKEP).

The protein belongs to the SVF1 family.

The protein localises to the golgi apparatus. It localises to the cis-Golgi network membrane. It is found in the endoplasmic reticulum membrane. The protein resides in the cytoplasm. Its subcellular location is the nucleus. Ceramide-binding protein that may transfer ceramides from the endoplasmic reticulum membrane to the cis-Golgi network membrane, and is thereby required for the biosynthesis of complex sphingolipids. The chain is Ceramide-binding protein svf-1 (svf-1) from Neurospora crassa (strain ATCC 24698 / 74-OR23-1A / CBS 708.71 / DSM 1257 / FGSC 987).